The following is a 763-amino-acid chain: Protein translocase subunit SecA 2 (763 aa).

Residues Q83, 101–105 (GEGKT), and D490 each bind ATP.

It belongs to the SecA family. In terms of assembly, monomer and homodimer. Part of the essential Sec protein translocation apparatus which comprises SecA, SecYEG and auxiliary proteins SecDF. Other proteins may also be involved.

It is found in the cell membrane. It localises to the cytoplasm. The catalysed reaction is ATP + H2O + cellular proteinSide 1 = ADP + phosphate + cellular proteinSide 2.. In terms of biological role, part of the Sec protein translocase complex. Interacts with the SecYEG preprotein conducting channel. Has a central role in coupling the hydrolysis of ATP to the transfer of proteins into and across the cell membrane, serving as an ATP-driven molecular motor driving the stepwise translocation of polypeptide chains across the membrane. The sequence is that of Protein translocase subunit SecA 2 from Corynebacterium glutamicum (strain ATCC 13032 / DSM 20300 / JCM 1318 / BCRC 11384 / CCUG 27702 / LMG 3730 / NBRC 12168 / NCIMB 10025 / NRRL B-2784 / 534).